We begin with the raw amino-acid sequence, 527 residues long: 2-isopropylmalate synthase (527 aa).

In terms of domain architecture, Pyruvate carboxyltransferase spans 18–280 (IRIFDTTLRD…QTNINSKRLV (263 aa)). Residues aspartate 27, histidine 215, histidine 217, and asparagine 251 each coordinate Mn(2+). Residues 405 to 527 (TLVDYEVTSG…ASDPGELPQP (123 aa)) are regulatory domain.

This sequence belongs to the alpha-IPM synthase/homocitrate synthase family. LeuA type 1 subfamily. Homodimer. Mn(2+) serves as cofactor.

The protein resides in the cytoplasm. The enzyme catalyses 3-methyl-2-oxobutanoate + acetyl-CoA + H2O = (2S)-2-isopropylmalate + CoA + H(+). It participates in amino-acid biosynthesis; L-leucine biosynthesis; L-leucine from 3-methyl-2-oxobutanoate: step 1/4. Catalyzes the condensation of the acetyl group of acetyl-CoA with 3-methyl-2-oxobutanoate (2-ketoisovalerate) to form 3-carboxy-3-hydroxy-4-methylpentanoate (2-isopropylmalate). The protein is 2-isopropylmalate synthase of Rhodopirellula baltica (strain DSM 10527 / NCIMB 13988 / SH1).